A 421-amino-acid polypeptide reads, in one-letter code: Imidazolonepropionase (421 aa).

Residues H80 and H82 each coordinate Fe(3+). The Zn(2+) site is built by H80 and H82. R89, Y152, and H185 together coordinate 4-imidazolone-5-propanoate. Y152 contributes to the N-formimidoyl-L-glutamate binding site. H249 provides a ligand contact to Fe(3+). H249 is a binding site for Zn(2+). E252 is a binding site for 4-imidazolone-5-propanoate. Fe(3+) is bound at residue D324. Zn(2+) is bound at residue D324. N-formimidoyl-L-glutamate contacts are provided by N326 and G328. Position 329 (S329) interacts with 4-imidazolone-5-propanoate.

Belongs to the metallo-dependent hydrolases superfamily. HutI family. Homodimer. Zn(2+) is required as a cofactor. The cofactor is Fe(3+).

It is found in the cytoplasm. It catalyses the reaction 4-imidazolone-5-propanoate + H2O = N-formimidoyl-L-glutamate. It participates in amino-acid degradation; L-histidine degradation into L-glutamate; N-formimidoyl-L-glutamate from L-histidine: step 3/3. Functionally, catalyzes the hydrolytic cleavage of the carbon-nitrogen bond in imidazolone-5-propanoate to yield N-formimidoyl-L-glutamate. It is the third step in the universal histidine degradation pathway. The chain is Imidazolonepropionase from Bacillus subtilis (strain 168).